A 131-amino-acid chain; its full sequence is NADH-quinone oxidoreductase subunit I 2 (131 aa).

2 4Fe-4S ferredoxin-type domains span residues 42-71 (LKVSHSKAKCVCCYLCPTVCPAKCITVEAG) and 81-110 (ERYEIDMLRCIFCGYCVEACPVDALKMTGE). 8 residues coordinate [4Fe-4S] cluster: Cys-51, Cys-54, Cys-57, Cys-61, Cys-90, Cys-93, Cys-96, and Cys-100.

It belongs to the complex I 23 kDa subunit family. In terms of assembly, NDH-1 is composed of 14 different subunits. Subunits NuoA, H, J, K, L, M, N constitute the membrane sector of the complex. The cofactor is [4Fe-4S] cluster.

The protein resides in the cell inner membrane. The catalysed reaction is a quinone + NADH + 5 H(+)(in) = a quinol + NAD(+) + 4 H(+)(out). NDH-1 shuttles electrons from NADH, via FMN and iron-sulfur (Fe-S) centers, to quinones in the respiratory chain. The immediate electron acceptor for the enzyme in this species is believed to be ubiquinone. Couples the redox reaction to proton translocation (for every two electrons transferred, four hydrogen ions are translocated across the cytoplasmic membrane), and thus conserves the redox energy in a proton gradient. The protein is NADH-quinone oxidoreductase subunit I 2 of Geobacter metallireducens (strain ATCC 53774 / DSM 7210 / GS-15).